The following is an 832-amino-acid chain: Translation initiation factor IF-2 (832 aa).

Residues 1 to 10 (MLMSDVEKFG) show a composition bias toward basic and acidic residues. Disordered stretches follow at residues 1-87 (MLMS…SRSA), 120-148 (RDEE…PAAA), and 163-201 (IAPG…GGGG). Gly residues predominate over residues 11–20 (GDCGSSGGSG). Composition is skewed to polar residues over residues 29–42 (RAST…STGG) and 71–87 (SPYT…SRSA). A tr-type G domain is found at 331-500 (PRPPVVTVMG…LLLAEMLELR (170 aa)). The interval 340–347 (GHVDHGKT) is G1. 340-347 (GHVDHGKT) is a binding site for GTP. The tract at residues 365-369 (GITQH) is G2. Positions 386 to 389 (DTPG) are G3. GTP-binding positions include 386–390 (DTPGH) and 440–443 (NKID). The segment at 440 to 443 (NKID) is G4. The segment at 476-478 (SAK) is G5.

This sequence belongs to the TRAFAC class translation factor GTPase superfamily. Classic translation factor GTPase family. IF-2 subfamily.

The protein localises to the cytoplasm. In terms of biological role, one of the essential components for the initiation of protein synthesis. Protects formylmethionyl-tRNA from spontaneous hydrolysis and promotes its binding to the 30S ribosomal subunits. Also involved in the hydrolysis of GTP during the formation of the 70S ribosomal complex. The sequence is that of Translation initiation factor IF-2 from Anaplasma marginale (strain St. Maries).